The primary structure comprises 754 residues: uncharacterized protein (754 aa).

A run of 10 helical transmembrane segments spans residues 3–23 (ITTVGVCIISGIFPLLILPQL), 24–44 (PGTLTLAFLTLFACVLAFIPV), 50–70 (IALTLLFFVWGILSAKQILWA), 223–243 (HLMAISGLHIAFAALLAAGLI), 254–274 (WIHWQIPLIGGICCAAFYAWL), 320–340 (VAILSQSLWLSAAAVAALIFW), 370–390 (LLLMPVQIVIFHGISLTSFIA), 392–412 (LLAIPLVTFITVPLILAAMVV), 446–466 (WINIAECWQWLSFSPWFLLVV), and 471–491 (AWRTLPAMCVAGGLLMCWPLW).

It to B.subtilis ComEC, N.gonorrhoeae ComA, and H.influenzae Rec2.

Its subcellular location is the cell membrane. This is an uncharacterized protein from Escherichia coli (strain K12).